The chain runs to 159 residues: Eukaryotic translation initiation factor 5A (159 aa).

The residue at position 55 (Lys55) is a Hypusine.

The protein belongs to the eIF-5A family. In terms of processing, lys-55 undergoes hypusination, a unique post-translational modification that consists in the addition of a butylamino group from spermidine to lysine side chain, leading to the formation of the unusual amino acid hypusine. eIF-5As are the only known proteins to undergo this modification, which is essential for their function.

The protein localises to the cytoplasm. Its function is as follows. Translation factor that promotes translation elongation and termination, particularly upon ribosome stalling at specific amino acid sequence contexts. Binds between the exit (E) and peptidyl (P) site of the ribosome and promotes rescue of stalled ribosome: specifically required for efficient translation of polyproline-containing peptides as well as other motifs that stall the ribosome. Acts as a ribosome quality control (RQC) cofactor by joining the RQC complex to facilitate peptidyl transfer during CAT tailing step. In Dictyostelium discoideum (Social amoeba), this protein is Eukaryotic translation initiation factor 5A (eif5a).